The sequence spans 519 residues: Glycerophosphoinositol permease 1 (519 aa).

Residues 1–32 form a disordered region; that stretch reads MSDLVKSSEVIETTEVPPHNNNNNKRHFKYDS. Residues 39–59 form a helical membrane-spanning segment; the sequence is LAGGVKLKDALMILCAGFALI. N93 carries N-linked (GlcNAc...) asparagine glycosylation. The next 3 helical transmembrane spans lie at 94–114, 117–137, and 141–161; these read ASLV…DYIG, WSIV…AASH, and VNGM…GIGA. An N-linked (GlcNAc...) asparagine glycan is attached at N175. Helical transmembrane passes span 186–206, 216–236, 273–293, 313–333, 337–357, 363–383, 404–424, and 432–452; these read ILAT…IFLI, DAIW…VFYF, VAWF…AGII, LLLG…VDIL, YTMM…GCGY, ITGL…FGPG, GISA…FSPI, and WTFI…FIFI. Residues 487 to 500 show a composition bias toward acidic residues; sequence EEEDLEGSSEDSSD. Positions 487-519 are disordered; the sequence is EEEDLEGSSEDSSDGEIVKNNTKNDVEKVDALK. N506 is a glycosylation site (N-linked (GlcNAc...) asparagine). Residues 508–519 show a composition bias toward basic and acidic residues; that stretch reads TKNDVEKVDALK.

It belongs to the major facilitator superfamily. Sugar transporter (TC 2.A.1.1) family.

The protein localises to the cell membrane. It carries out the reaction sn-glycero-3-phospho-1D-myo-inositol(out) = sn-glycero-3-phospho-1D-myo-inositol(in). Its function is as follows. Glycerophosphodiester transporter that mediates uptake of glycerophosphoinositol (GroPIns) as a source of inositol and phosphate. Does not possess detectable glycerophosphocholine (GroPCho) transport activity. Although no glycerophosphoinositol transport activity occurs in the absence of GIT1, C.albicans is still able to use glycerophosphoinositol as a phosphate source at pH 7.5, albeit slowly. Thus, a second, GIT1-independent, mechanism must exist for utilizing glycerophosphoinositol as a phosphate source at physiological pH. The expanded ability to utilize GroPIns and GroPCho results from the organism's pathogenic nature and its need to occupy a variety of environments within its host organism. This possibility is buttressed by the fact that GroPIns and GroPCho are present and abundant in human fluids. The polypeptide is Glycerophosphoinositol permease 1 (Candida albicans (strain SC5314 / ATCC MYA-2876) (Yeast)).